A 2209-amino-acid polypeptide reads, in one-letter code: Genome polyprotein (2209 aa).

Gly2 carries the N-myristoyl glycine; by host lipid modification. At Gly2–Gln1520 the chain is on the cytoplasmic side. Residues Gly580–Ala600 are amphipathic alpha-helix. Residues Ala599 to Glu619 form a disordered region. Residues His901 and Asp919 each act as for protease 2A activity in the active site. Zn(2+) is bound by residues Cys936 and Cys938. Cys990 functions as the For protease 2A activity in the catalytic mechanism. Zn(2+)-binding residues include Cys996 and His998. Residues Gly1128 to Gln1200 form a membrane-binding region. Residues Gly1128–Thr1266 form an oligomerization region. The interval Ser1149–Ser1153 is RNA-binding. The SF3 helicase domain occupies Glu1232–Asn1388. Gly1256–Ser1263 provides a ligand contact to ATP. Zn(2+) is bound by residues Cys1396, Cys1399, Cys1408, and Cys1413. The C4-type zinc-finger motif lies at Cys1396–Cys1413. An RNA-binding region spans residues Glu1440–Ile1447. An oligomerization region spans residues Met1451–Gln1456. An intramembrane segment occupies Ala1521 to Tyr1536. The Cytoplasmic portion of the chain corresponds to Lys1537–Phe2209. Tyr1546 carries the post-translational modification O-(5'-phospho-RNA)-tyrosine. Tyr1546 carries the post-translational modification O-UMP-tyrosine; transient. The region spanning Gly1566–Phe1744 is the Peptidase C3 domain. Residues His1605, Glu1636, and Cys1712 each act as for protease 3C activity in the active site. Positions Glu1975 to Leu2090 constitute a RdRp catalytic domain. Mg(2+) contacts are provided by Asp1981 and Asp2076.

This sequence belongs to the picornaviruses polyprotein family. As to quaternary structure, interacts with capsid protein VP1 and capsid protein VP3 to form heterotrimeric protomers. In terms of assembly, interacts with capsid protein VP0, and capsid protein VP3 to form heterotrimeric protomers. Five protomers subsequently associate to form pentamers which serve as building blocks for the capsid. Interacts with capsid protein VP2, capsid protein VP3 and capsid protein VP4 following cleavage of capsid protein VP0. Interacts with human PVR. Interacts with capsid protein VP1 and capsid protein VP3 in the mature capsid. As to quaternary structure, interacts with capsid protein VP0 and capsid protein VP1 to form heterotrimeric protomers. Five protomers subsequently associate to form pentamers which serve as building blocks for the capsid. Interacts with capsid protein VP4 in the mature capsid. Interacts with protein 2C; this interaction may be important for virion morphogenesis. In terms of assembly, interacts with capsid protein VP1 and capsid protein VP3. Homodimer. As to quaternary structure, homohexamer; forms a hexameric ring structure with 6-fold symmetry characteristic of AAA+ ATPases. Interacts (via N-terminus) with host RTN3 (via reticulon domain); this interaction is important for viral replication. Interacts with capsid protein VP3; this interaction may be important for virion morphogenesis. In terms of assembly, interacts with protein 3CD. Homodimer. Interacts with host GBF1. Interacts (via GOLD domain) with host ACBD3 (via GOLD domain); this interaction allows the formation of a viral protein 3A/ACBD3 heterotetramer with a 2:2 stoichiometry, which will stimulate the recruitment of host PI4KB in order to synthesize PI4P at the viral RNA replication sites. As to quaternary structure, interacts with RNA-directed RNA polymerase. In terms of assembly, interacts with protein 3AB and with RNA-directed RNA polymerase. Interacts with Viral protein genome-linked and with protein 3CD. It depends on Mg(2+) as a cofactor. Specific enzymatic cleavages in vivo by the viral proteases yield processing intermediates and the mature proteins. In terms of processing, myristoylation is required for the formation of pentamers during virus assembly. Further assembly of 12 pentamers and a molecule of genomic RNA generates the provirion. Post-translationally, during virion maturation, immature virions are rendered infectious following cleavage of VP0 into VP4 and VP2. This maturation seems to be an autocatalytic event triggered by the presence of RNA in the capsid and it is followed by a conformational change infectious virion. Myristoylation is required during RNA encapsidation and formation of the mature virus particle. In terms of processing, VPg is uridylylated by the polymerase into VPg-pUpU. This acts as a nucleotide-peptide primer for the genomic RNA replication.

Its subcellular location is the virion. It is found in the host cytoplasm. The protein localises to the host cytoplasmic vesicle membrane. The protein resides in the host nucleus. The catalysed reaction is RNA(n) + a ribonucleoside 5'-triphosphate = RNA(n+1) + diphosphate. The enzyme catalyses Selective cleavage of Tyr-|-Gly bond in the picornavirus polyprotein.. It catalyses the reaction a ribonucleoside 5'-triphosphate + H2O = a ribonucleoside 5'-diphosphate + phosphate + H(+). It carries out the reaction Selective cleavage of Gln-|-Gly bond in the poliovirus polyprotein. In other picornavirus reactions Glu may be substituted for Gln, and Ser or Thr for Gly.. With respect to regulation, replication or transcription is subject to high level of random mutations by the nucleotide analog ribavirin. Its function is as follows. Forms an icosahedral capsid of pseudo T=3 symmetry with capsid proteins VP2 and VP3. The capsid is 300 Angstroms in diameter, composed of 60 copies of each capsid protein and enclosing the viral positive strand RNA genome. Capsid protein VP1 mainly forms the vertices of the capsid. Capsid protein VP1 interacts with host cell receptor PVR to provide virion attachment to target host epithelial cells. This attachment induces virion internalization predominantly through clathrin- and caveolin-independent endocytosis in Hela cells and through caveolin-mediated endocytosis in brain microvascular endothelial cells. Tyrosine kinases are probably involved in the entry process. Virus binding to PVR induces increased junctional permeability and rearrangement of junctional proteins. Modulation of endothelial tight junctions, as well as cytolytic infection of endothelial cells themselves, may result in loss of endothelial integrity which may help the virus to reach the CNS. After binding to its receptor, the capsid undergoes conformational changes. Capsid protein VP1 N-terminus (that contains an amphipathic alpha-helix) and capsid protein VP4 are externalized. Together, they shape a pore in the host membrane through which viral genome is translocated to host cell cytoplasm. Functionally, forms an icosahedral capsid of pseudo T=3 symmetry with capsid proteins VP1 and VP3. The capsid is 300 Angstroms in diameter, composed of 60 copies of each capsid protein and enclosing the viral positive strand RNA genome. In terms of biological role, forms an icosahedral capsid of pseudo T=3 symmetry with capsid proteins VP2 and VP1. The capsid is 300 Angstroms in diameter, composed of 60 copies of each capsid protein and enclosing the viral positive strand RNA genome. Lies on the inner surface of the capsid shell. After binding to the host receptor, the capsid undergoes conformational changes. Capsid protein VP4 is released, Capsid protein VP1 N-terminus is externalized, and together, they shape a pore in the host membrane through which the viral genome is translocated into the host cell cytoplasm. Its function is as follows. Component of immature procapsids, which is cleaved into capsid proteins VP4 and VP2 after maturation. Allows the capsid to remain inactive before the maturation step. Functionally, cysteine protease that cleaves viral polyprotein and specific host proteins. It is responsible for the autocatalytic cleavage between the P1 and P2 regions, which is the first cleavage occurring in the polyprotein. Also cleaves the host translation initiation factor EIF4G1, in order to shut down the capped cellular mRNA translation. Inhibits the host nucleus-cytoplasm protein and RNA trafficking by cleaving host members of the nuclear pores including NUP98, NUP62 and NUP153. Counteracts stress granule formation probably by antagonizing its assembly or promoting its dissassembly. Cleaves and inhibits host IFIH1/MDA5, thereby inhibiting the type-I IFN production and the establishment of the antiviral state. Cleaves and inhibits host MAVS, thereby inhibiting the type-I IFN production and the establishment of the antiviral state. In terms of biological role, plays an essential role in the virus replication cycle by acting as a viroporin. Creates a pore in the host endoplasmic reticulum and as a consequence releases Ca2+ in the cytoplasm of infected cell. In turn, high levels of cytoplasmic calcium may trigger membrane trafficking and transport of viral ER-associated proteins to viroplasms, sites of viral genome replication. Induces and associates with structural rearrangements of intracellular membranes. Displays RNA-binding, nucleotide binding and NTPase activities. May play a role in virion morphogenesis and viral RNA encapsidation by interacting with the capsid protein VP3. Its function is as follows. Localizes the viral replication complex to the surface of membranous vesicles. Together with protein 3CD binds the Cis-Active RNA Element (CRE) which is involved in RNA synthesis initiation. Acts as a cofactor to stimulate the activity of 3D polymerase, maybe through a nucleid acid chaperone activity. Functionally, localizes the viral replication complex to the surface of membranous vesicles. It inhibits host cell endoplasmic reticulum-to-Golgi apparatus transport and causes the disassembly of the Golgi complex, possibly through GBF1 interaction. This would result in depletion of MHC, trail receptors and IFN receptors at the host cell surface. Plays an essential role in viral RNA replication by recruiting ACBD3 and PI4KB at the viral replication sites, thereby allowing the formation of the rearranged membranous structures where viral replication takes place. In terms of biological role, acts as a primer for viral RNA replication and remains covalently bound to viral genomic RNA. VPg is uridylylated prior to priming replication into VPg-pUpU. The oriI viral genomic sequence may act as a template for this. The VPg-pUpU is then used as primer on the genomic RNA poly(A) by the RNA-dependent RNA polymerase to replicate the viral genome. During genome replication, the VPg-RNA linkage is removed by the host TDP2, thereby accelerating replication. During the late stage of the replication cycle, host TDP2 is excluded from sites of viral RNA synthesis and encapsidation, allowing for the generation of progeny virions. Involved in the viral replication complex and viral polypeptide maturation. It exhibits protease activity with a specificity and catalytic efficiency that is different from protease 3C. Protein 3CD binds to the 5'UTR of the viral genome. Its function is as follows. Major viral protease that mediates proteolytic processing of the polyprotein. Cleaves host EIF5B, contributing to host translation shutoff. Cleaves also host PABPC1, contributing to host translation shutoff. Cleaves host RIGI and thus contributes to the inhibition of type I interferon production. Cleaves host NLRP1, triggers host N-glycine-mediated degradation of the autoinhibitory NLRP1 N-terminal fragment. Inhibits the integrated stress response (ISR) in the infected cell by cleaving host G3BP1. Stress granule formation is thus inhibited, which allows protein synthesis and viral replication. Functionally, replicates the viral genomic RNA on the surface of intracellular membranes. May form linear arrays of subunits that propagate along a strong head-to-tail interaction called interface-I. Covalently attaches UMP to a tyrosine of VPg, which is used to prime RNA synthesis. The positive stranded RNA genome is first replicated at virus induced membranous vesicles, creating a dsRNA genomic replication form. This dsRNA is then used as template to synthesize positive stranded RNA genomes. ss(+)RNA genomes are either translated, replicated or encapsidated. This chain is Genome polyprotein, found in Homo sapiens (Human).